We begin with the raw amino-acid sequence, 396 residues long: Phosphoglycerate kinase (396 aa).

Substrate-binding positions include D21–N23, R36, H59–K62, R119, and R156. Residues K206, G294, E325, and G352 to S355 contribute to the ATP site.

Belongs to the phosphoglycerate kinase family. In terms of assembly, monomer.

The protein resides in the cytoplasm. It catalyses the reaction (2R)-3-phosphoglycerate + ATP = (2R)-3-phospho-glyceroyl phosphate + ADP. Its pathway is carbohydrate degradation; glycolysis; pyruvate from D-glyceraldehyde 3-phosphate: step 2/5. This is Phosphoglycerate kinase from Staphylococcus aureus (strain USA300).